We begin with the raw amino-acid sequence, 1015 residues long: Putative calcium-transporting ATPase 7, plasma membrane-type (1015 aa).

At methionine 1 the chain carries N-acetylmethionine. The Cytoplasmic portion of the chain corresponds to 1-161 (MESYLNSNFD…NKFAESELRS (161 aa)). Positions 20 to 31 (VLEKWRNLCSVV) are interaction with calmodulin. Serine 45 bears the Phosphoserine; by CPK mark. Residues 162–182 (FWVFVWEALQDMTLMILGVCA) traverse the membrane as a helical segment. At 183–200 (FVSLIVGIATEGWPQGSH) the chain is on the lumenal side. A helical transmembrane segment spans residues 201–221 (DGLGIVASILLVVFVTATSDY). Topologically, residues 222–349 (RQSLQFRDLD…DDETPLQVKL (128 aa)) are cytoplasmic. The helical transmembrane segment at 350–369 (NGVATIIGKIGLSFAIVTFA) threads the bilayer. The Lumenal segment spans residues 370–399 (VLVQGMFMRKLSLGPHWWWSGDDALELLEY). Residues 400-417 (FAIAVTIVVVAVPEGLPL) traverse the membrane as a helical segment. Topologically, residues 418–811 (AVTLSLAFAM…KWGRSVYINI (394 aa)) are cytoplasmic. Aspartate 455 functions as the 4-aspartylphosphate intermediate in the catalytic mechanism. Mg(2+)-binding residues include aspartate 756 and aspartate 760. A helical transmembrane segment spans residues 812 to 830 (QKFVQFQLTVNVVALIVNF). Topologically, residues 831 to 841 (SSACLTGSAPL) are lumenal. A helical transmembrane segment spans residues 842–862 (TAVQLLWVNMIMDTLGALALA). Topologically, residues 863-882 (TEPPNNELMKRMPVGRRGNF) are cytoplasmic. Residues 883–905 (ITNAMWRNILGQAVYQFIIIWIL) traverse the membrane as a helical segment. The Lumenal portion of the chain corresponds to 906 to 917 (QAKGKSMFGLVG). A helical membrane pass occupies residues 918–939 (SDSTLVLNTLIFNCFVFCQVFN). Residues 940-957 (EVSSREMEEIDVFKGILD) are Cytoplasmic-facing. Residues 958 to 979 (NYVFVVVIGATVFFQIIIIEFL) form a helical membrane-spanning segment. Residues 980 to 989 (GTFASTTPLT) are Lumenal-facing. Residues 990–1011 (IVQWFFSIFVGFLGMPIAAGLK) form a helical membrane-spanning segment. The Cytoplasmic portion of the chain corresponds to 1012-1015 (KIPV).

Belongs to the cation transport ATPase (P-type) (TC 3.A.3) family. Type IIB subfamily.

The protein localises to the membrane. It carries out the reaction Ca(2+)(in) + ATP + H2O = Ca(2+)(out) + ADP + phosphate + H(+). With respect to regulation, activated by calmodulin. In terms of biological role, this magnesium-dependent enzyme catalyzes the hydrolysis of ATP coupled with the translocation of calcium from the cytosol out of the cell or into organelles. This Arabidopsis thaliana (Mouse-ear cress) protein is Putative calcium-transporting ATPase 7, plasma membrane-type (ACA7).